The following is a 169-amino-acid chain: TPD1 protein homolog 1B (169 aa).

The signal sequence occupies residues 1–25 (MADCTTMRLASSVTIILLLLVASQA).

As to expression, expressed in roots, and at low levels in anthers during meiosis.

Its function is as follows. May play a role during anther development. The protein is TPD1 protein homolog 1B of Oryza sativa subsp. japonica (Rice).